The chain runs to 264 residues: Thiazole synthase (264 aa).

Catalysis depends on K106, which acts as the Schiff-base intermediate with DXP. 1-deoxy-D-xylulose 5-phosphate contacts are provided by residues G167, 193 to 194 (AG), and 215 to 216 (NS).

The protein belongs to the ThiG family. As to quaternary structure, homotetramer. Forms heterodimers with either ThiH or ThiS.

The protein localises to the cytoplasm. The enzyme catalyses [ThiS sulfur-carrier protein]-C-terminal-Gly-aminoethanethioate + 2-iminoacetate + 1-deoxy-D-xylulose 5-phosphate = [ThiS sulfur-carrier protein]-C-terminal Gly-Gly + 2-[(2R,5Z)-2-carboxy-4-methylthiazol-5(2H)-ylidene]ethyl phosphate + 2 H2O + H(+). It participates in cofactor biosynthesis; thiamine diphosphate biosynthesis. Its function is as follows. Catalyzes the rearrangement of 1-deoxy-D-xylulose 5-phosphate (DXP) to produce the thiazole phosphate moiety of thiamine. Sulfur is provided by the thiocarboxylate moiety of the carrier protein ThiS. In vitro, sulfur can be provided by H(2)S. The sequence is that of Thiazole synthase from Pseudomonas putida (strain W619).